Consider the following 345-residue polypeptide: Nuclear hormone receptor family nhr-176 (345 aa).

The nuclear receptor DNA-binding region spans 7–82 (IQPCLVCGQS…AGMLEKMVFS (76 aa)). Residues 10 to 30 (CLVCGQSSNSILFGAPSCRAC) form an NR C4-type zinc finger. An NR C4-type; degenerate zinc finger spans residues 46–65 (NNCLGECSFAKKSMKPCQSC). The 251-residue stretch at 92–342 (FEKSILEELE…CPLYAISTNS (251 aa)) folds into the NR LBD domain. The interval 331–342 (SGCPLYAISTNS) is AF-2.

The protein localises to the nucleus. In terms of biological role, nuclear hormone receptor. Binds to xenobiotic ligand thiabendazole (TBZ), in vitro. Involved in the up-regulation of phase I detoxification genes, such as probable cytochrome P450 cyp-35d1, in response to TBZ. This chain is Nuclear hormone receptor family nhr-176, found in Caenorhabditis elegans.